An 84-amino-acid chain; its full sequence is Perlustrin (84 aa).

Positions 1–82 (LSCASCENAA…LDFKGVCARV (82 aa)) constitute an IGFBP N-terminal domain. Cystine bridges form between C3–C28, C6–C30, C11–C31, C18–C34, C42–C55, and C49–C79.

In terms of tissue distribution, shell.

Functionally, binds human IGF1 and IGF2 and bovine insulin. This Haliotis laevigata (Smooth Australian abalone) protein is Perlustrin.